We begin with the raw amino-acid sequence, 198 residues long: Ribonuclease HII (198 aa).

One can recognise an RNase H type-2 domain in the interval 10–198; the sequence is HLVAGVDEVG…PVRRALGIAS (189 aa). A divalent metal cation-binding residues include Asp-16, Glu-17, and Asp-108.

This sequence belongs to the RNase HII family. Mn(2+) serves as cofactor. Requires Mg(2+) as cofactor.

The protein resides in the cytoplasm. The catalysed reaction is Endonucleolytic cleavage to 5'-phosphomonoester.. Its function is as follows. Endonuclease that specifically degrades the RNA of RNA-DNA hybrids. The polypeptide is Ribonuclease HII (Cronobacter sakazakii (strain ATCC BAA-894) (Enterobacter sakazakii)).